The primary structure comprises 390 residues: Digeranylgeranylglycerophospholipid reductase (390 aa).

Positions 18, 37, 48, 49, 51, 98, 122, 278, 290, and 291 each coordinate FAD. Position 368 (Val-368) interacts with a 2,3-bis-O-(geranylgeranyl)-sn-glycerol 1-phospholipid.

This sequence belongs to the geranylgeranyl reductase family. DGGGPL reductase subfamily. FAD is required as a cofactor.

The enzyme catalyses a 2,3-bis-O-phytanyl-sn-glycerol 1-phospholipid + 8 A = a 2,3-bis-O-(geranylgeranyl)-sn-glycerol 1-phospholipid + 8 AH2. The catalysed reaction is 2,3-bis-O-(phytanyl)-sn-glycerol 1-phosphate + 8 A = 2,3-bis-O-(geranylgeranyl)-sn-glycerol 1-phosphate + 8 AH2. It carries out the reaction CDP-2,3-bis-O-(geranylgeranyl)-sn-glycerol + 8 AH2 = CDP-2,3-bis-O-(phytanyl)-sn-glycerol + 8 A. It catalyses the reaction archaetidylserine + 8 AH2 = 2,3-bis-O-phytanyl-sn-glycero-3-phospho-L-serine + 8 A. It participates in membrane lipid metabolism; glycerophospholipid metabolism. Is involved in the reduction of 2,3-digeranylgeranylglycerophospholipids (unsaturated archaeols) into 2,3-diphytanylglycerophospholipids (saturated archaeols) in the biosynthesis of archaeal membrane lipids. Catalyzes the formation of archaetidic acid (2,3-di-O-phytanyl-sn-glyceryl phosphate) from 2,3-di-O-geranylgeranylglyceryl phosphate (DGGGP) via the hydrogenation of each double bond of the isoprenoid chains. Is also probably able to reduce double bonds of geranyl groups in CDP-2,3-bis-O-(geranylgeranyl)-sn-glycerol and archaetidylserine, thus acting at various stages in the biosynthesis of archaeal membrane lipids. This chain is Digeranylgeranylglycerophospholipid reductase, found in Methanococcus maripaludis (strain C5 / ATCC BAA-1333).